A 389-amino-acid polypeptide reads, in one-letter code: Aspartyl protease UND (389 aa).

An N-terminal signal peptide occupies residues 1-19; it reads MKTTMNFVFLFFLPLLINA. The region spanning 58–383 is the Peptidase A1 domain; the sequence is FMAEIHFGSP…DLSAKTAYIN (326 aa). Residue D76 is part of the active site. C86 and C92 are joined by a disulfide. Residue N238 is glycosylated (N-linked (GlcNAc...) asparagine). Residue D268 is part of the active site. A disulfide bond links C304 and C346.

The protein belongs to the peptidase A1 family.

In terms of biological role, probable aspartic protease activated by the transcription factor MYB80. May participate in the regulation of the timing of tapetal programmed cell death (PCD) which is critical for pollen development. The protein is Aspartyl protease UND of Arabidopsis thaliana (Mouse-ear cress).